The sequence spans 707 residues: Potassium-transporting ATPase ATP-binding subunit (707 aa).

The segment covering 1-11 has biased composition (basic and acidic residues); the sequence is MNTDTQKHEDA. The interval 1 to 37 is disordered; that stretch reads MNTDTQKHEDAMSTTTPARAPHDDAPSGQQPGQGRVG. Transmembrane regions (helical) follow at residues 61–81, 89–109, 238–258, and 271–291; these read VMAK…TTAF, WFGW…NLAE, IALN…CATL, and MIVL…ALLS. The active-site 4-aspartylphosphate intermediate is the D326. ATP contacts are provided by residues D363, E367, 397–404, and K415; that span reads FTAQTRMS. Mg(2+)-binding residues include D542 and D546. 3 consecutive transmembrane segments (helical) span residues 612 to 632, 640 to 660, and 683 to 703; these read FAII…LNIM, AILS…PLAL, and LGGL…VSLI.

This sequence belongs to the cation transport ATPase (P-type) (TC 3.A.3) family. Type IA subfamily. The system is composed of three essential subunits: KdpA, KdpB and KdpC.

It is found in the cell membrane. It carries out the reaction K(+)(out) + ATP + H2O = K(+)(in) + ADP + phosphate + H(+). In terms of biological role, part of the high-affinity ATP-driven potassium transport (or Kdp) system, which catalyzes the hydrolysis of ATP coupled with the electrogenic transport of potassium into the cytoplasm. This subunit is responsible for energy coupling to the transport system and for the release of the potassium ions to the cytoplasm. In Streptomyces coelicolor (strain ATCC BAA-471 / A3(2) / M145), this protein is Potassium-transporting ATPase ATP-binding subunit.